A 215-amino-acid polypeptide reads, in one-letter code: 3-dehydroquinate dehydratase (215 aa).

Residues 27–29 (ELR) and Arg-54 each bind 3-dehydroquinate. His-112 functions as the Proton donor/acceptor in the catalytic mechanism. Lys-139 functions as the Schiff-base intermediate with substrate in the catalytic mechanism. 3-dehydroquinate contacts are provided by Arg-176 and Gln-198.

Belongs to the type-I 3-dehydroquinase family. As to quaternary structure, homodimer.

It carries out the reaction 3-dehydroquinate = 3-dehydroshikimate + H2O. Its pathway is metabolic intermediate biosynthesis; chorismate biosynthesis; chorismate from D-erythrose 4-phosphate and phosphoenolpyruvate: step 3/7. In terms of biological role, involved in the third step of the chorismate pathway, which leads to the biosynthesis of aromatic amino acids. Catalyzes the cis-dehydration of 3-dehydroquinate (DHQ) and introduces the first double bond of the aromatic ring to yield 3-dehydroshikimate. The protein is 3-dehydroquinate dehydratase of Pyrococcus abyssi (strain GE5 / Orsay).